The sequence spans 428 residues: Maltoporin (428 aa).

The signal sequence occupies residues 1–24; sequence MTTLRKLPIALAVAAGVLSTQAMA.

This sequence belongs to the porin LamB (TC 1.B.3) family. In terms of assembly, homotrimer formed of three 18-stranded antiparallel beta-barrels, containing three independent channels.

It is found in the cell outer membrane. It carries out the reaction beta-maltose(in) = beta-maltose(out). Functionally, involved in the transport of maltose and maltodextrins. This chain is Maltoporin, found in Yersinia enterocolitica serotype O:8 / biotype 1B (strain NCTC 13174 / 8081).